The following is a 202-amino-acid chain: Translation initiation factor IF-3 (202 aa).

The protein belongs to the IF-3 family. As to quaternary structure, monomer.

The protein resides in the cytoplasm. IF-3 binds to the 30S ribosomal subunit and shifts the equilibrium between 70S ribosomes and their 50S and 30S subunits in favor of the free subunits, thus enhancing the availability of 30S subunits on which protein synthesis initiation begins. The protein is Translation initiation factor IF-3 of Prochlorococcus marinus (strain MIT 9211).